The following is a 396-amino-acid chain: Phosphoglycerate kinase (396 aa).

Residues 21–23 (DLN), R36, 59–62 (HFGR), R118, and R151 each bind substrate. ATP-binding positions include K201, E323, and 353–356 (GGDT).

It belongs to the phosphoglycerate kinase family. As to quaternary structure, monomer.

The protein localises to the cytoplasm. The catalysed reaction is (2R)-3-phosphoglycerate + ATP = (2R)-3-phospho-glyceroyl phosphate + ADP. It participates in carbohydrate degradation; glycolysis; pyruvate from D-glyceraldehyde 3-phosphate: step 2/5. This Brucella abortus biovar 1 (strain 9-941) protein is Phosphoglycerate kinase.